Here is a 536-residue protein sequence, read N- to C-terminus: MLKVSKRYYGFQSKSPFQLLPDFRLKCGLEIHTQLNTKFKLFSFSTNDPFHSIDSPNSNVSFFDAALPGTQPILNYEAVIDAIKLSLALNCDINANSQFDRKHYFYGDQPLGYQITQHYSPISSNGKLSLFENIDNIDQSQKDIGIIQLQIEQDTGKSMYDDSKHFTRIDLNRSNVPLIEMVTKPDFTDLKQVRSFIKKYQNLVRHLKISSGDLETGAMRVDVNLSINDYARVELKNLPNTSSIVNAIKYEYNRQVEIIKNGSADELLTSPETRSWTGVKTVKLRSKETTIDYRYLPDPELPRVILDNDVITNISNSIPTLPDELLSRLISKPYNLSMKDAKILVLNSNGQNEMYTQEELQNFYLKVFDCYYNVVGEKLNHKLPVNWIIHELIGSLNKLELPLSKVLPKLSPEKFSEFIVLIHNKEISNTSAKLLLFHVLNQIKENDHSIREINFDSLIEEFELKPATNASKVDLTELCQTIITELNNEKLLNDIISGKKKNSIQYLVGLGMRASQGTLSPQSLEETFKKILQVKW.

It belongs to the GatB/GatE family. GatB subfamily. As to quaternary structure, subunit of the heterotrimeric GatFAB amidotransferase (AdT) complex, composed of A, B and F subunits.

The protein resides in the mitochondrion. It catalyses the reaction L-glutamyl-tRNA(Gln) + L-glutamine + ATP + H2O = L-glutaminyl-tRNA(Gln) + L-glutamate + ADP + phosphate + H(+). Its function is as follows. Allows the formation of correctly charged Gln-tRNA(Gln) through the transamidation of misacylated Glu-tRNA(Gln) in the mitochondria. The reaction takes place in the presence of glutamine and ATP through an activated gamma-phospho-Glu-tRNA(Gln). The chain is Glutamyl-tRNA(Gln) amidotransferase subunit B, mitochondrial from Vanderwaltozyma polyspora (strain ATCC 22028 / DSM 70294 / BCRC 21397 / CBS 2163 / NBRC 10782 / NRRL Y-8283 / UCD 57-17) (Kluyveromyces polysporus).